A 318-amino-acid chain; its full sequence is AT-hook motif nuclear-localized protein 7 (318 aa).

2 disordered regions span residues 1 to 76 (METS…PSSS) and 241 to 318 (SDQQ…LPVD). The short motif at 56–64 (KKRRGRPRK) is the Bipartite nuclear localization signal element. The segment at residues 56–68 (KKRRGRPRKYEAN) is a DNA-binding region (a.T hook). In terms of domain architecture, PPC spans 120-259 (GSNFTPHVIT…RKQRVEHAPA (140 aa)). Basic and acidic residues predominate over residues 243–256 (QQDHQKPRKQRVEH). Residues 264–274 (VPPPPSPPPPA) are compositionally biased toward pro residues. Over residues 288–312 (PPSSFGISSWTNGQDMPRNSATDIN) the composition is skewed to polar residues.

Its subcellular location is the nucleus. Functionally, transcription factor that specifically binds AT-rich DNA sequences related to the nuclear matrix attachment regions (MARs). The chain is AT-hook motif nuclear-localized protein 7 from Arabidopsis thaliana (Mouse-ear cress).